The primary structure comprises 217 residues: Glycine betaine/carnitine/choline transport system permease protein OpuCB (217 aa).

The 180-residue stretch at Thr19–Leu198 folds into the ABC transmembrane type-1 domain. The next 6 membrane-spanning stretches (helical) occupy residues Leu23–Ala43, Gly52–Ile74, Ala84–Tyr101, Leu128–Tyr148, Ile150–Ile170, and Ile180–Val200.

Belongs to the binding-protein-dependent transport system permease family. CysTW subfamily. As to quaternary structure, the complex is composed of two ATP-binding proteins (OpuCA), two transmembrane proteins (OpuCB and OpuCD) and a solute-binding protein (OpuCC).

The protein resides in the cell membrane. Its function is as follows. Involved in a high affinity multicomponent binding-protein-dependent transport system for glycine betaine, carnitine and choline; probably responsible for the translocation of the substrate across the membrane. The polypeptide is Glycine betaine/carnitine/choline transport system permease protein OpuCB (opuCB) (Bacillus subtilis (strain 168)).